A 181-amino-acid chain; its full sequence is ATP-dependent protease subunit HslV (181 aa).

The active site involves T9. Na(+) contacts are provided by A166, C169, and T172.

The protein belongs to the peptidase T1B family. HslV subfamily. In terms of assembly, a double ring-shaped homohexamer of HslV is capped on each side by a ring-shaped HslU homohexamer. The assembly of the HslU/HslV complex is dependent on binding of ATP.

It localises to the cytoplasm. The enzyme catalyses ATP-dependent cleavage of peptide bonds with broad specificity.. With respect to regulation, allosterically activated by HslU binding. In terms of biological role, protease subunit of a proteasome-like degradation complex believed to be a general protein degrading machinery. This is ATP-dependent protease subunit HslV from Staphylococcus aureus (strain JH1).